Consider the following 258-residue polypeptide: Acyl-[acyl-carrier-protein]--UDP-N-acetylglucosamine O-acyltransferase (258 aa).

The protein belongs to the transferase hexapeptide repeat family. LpxA subfamily. In terms of assembly, homotrimer.

Its subcellular location is the cytoplasm. The catalysed reaction is a (3R)-hydroxyacyl-[ACP] + UDP-N-acetyl-alpha-D-glucosamine = a UDP-3-O-[(3R)-3-hydroxyacyl]-N-acetyl-alpha-D-glucosamine + holo-[ACP]. It functions in the pathway glycolipid biosynthesis; lipid IV(A) biosynthesis; lipid IV(A) from (3R)-3-hydroxytetradecanoyl-[acyl-carrier-protein] and UDP-N-acetyl-alpha-D-glucosamine: step 1/6. Functionally, involved in the biosynthesis of lipid A, a phosphorylated glycolipid that anchors the lipopolysaccharide to the outer membrane of the cell. This chain is Acyl-[acyl-carrier-protein]--UDP-N-acetylglucosamine O-acyltransferase, found in Pseudomonas putida (strain GB-1).